A 306-amino-acid chain; its full sequence is UDP-3-O-acyl-N-acetylglucosamine deacetylase (306 aa).

The Zn(2+) site is built by His-79, His-238, and Asp-242. His-265 functions as the Proton donor in the catalytic mechanism.

This sequence belongs to the LpxC family. It depends on Zn(2+) as a cofactor.

The enzyme catalyses a UDP-3-O-[(3R)-3-hydroxyacyl]-N-acetyl-alpha-D-glucosamine + H2O = a UDP-3-O-[(3R)-3-hydroxyacyl]-alpha-D-glucosamine + acetate. Its pathway is glycolipid biosynthesis; lipid IV(A) biosynthesis; lipid IV(A) from (3R)-3-hydroxytetradecanoyl-[acyl-carrier-protein] and UDP-N-acetyl-alpha-D-glucosamine: step 2/6. In terms of biological role, catalyzes the hydrolysis of UDP-3-O-myristoyl-N-acetylglucosamine to form UDP-3-O-myristoylglucosamine and acetate, the committed step in lipid A biosynthesis. This Shewanella loihica (strain ATCC BAA-1088 / PV-4) protein is UDP-3-O-acyl-N-acetylglucosamine deacetylase.